Consider the following 212-residue polypeptide: HTH-type transcriptional repressor KstR (212 aa).

The span at Met1–Thr11 shows a compositional bias: low complexity. Residues Met1 to Lys28 are disordered. One can recognise an HTH tetR-type domain in the interval Lys28–Ile88. The H-T-H motif DNA-binding region spans Gln51–Phe70.

Homodimer.

Controls the expression of genes used for utilizing diverse lipids as energy sources. This Rhodococcus jostii (strain RHA1) protein is HTH-type transcriptional repressor KstR (kstR).